Consider the following 153-residue polypeptide: MPPLLYRLRSVLADTVAMVIYCFITGMAVEMLLSEMTFQQSLSSRLLSIPVNIVIAWPYGLYRDRIVALLLKWGKNKHGIRNLADLFAYVSFQSPVYAAILWAIGADLSQIVRAVGSNAIISMLMGVVYGYFLEYCRHLFRVPVLNRQRIGSN.

4 helical membrane-spanning segments follow: residues 16–36 (VAMVIYCFITGMAVEMLLSEM), 42–62 (LSSRLLSIPVNIVIAWPYGLY), 86–106 (LFAYVSFQSPVYAAILWAIGA), and 114–134 (AVGSNAIISMLMGVVYGYFLE).

It belongs to the AlaE exporter family.

The protein resides in the cell inner membrane. Its function is as follows. Exports L-alanine. This is L-alanine exporter AlaE from Musicola paradisiaca (strain Ech703) (Dickeya paradisiaca).